A 443-amino-acid polypeptide reads, in one-letter code: MDRLGPFSNDPSDKPPCRGCSSYLMEPYIKCAECGPPPFFLCLQCFTRGFEYKKHQSDHTYEIMTSDFPVLDPSWTAQEEMALLEAVMDCGFGNWQDVANQMCTKTKEECEKHYMKHFINNPLFASTLLNLKQAEEAKTADTAIPFHSTDDPPRPTFDSLLSRDMAGYMPARADFIEEFDNYAEWDLRDIDFVEDDSDILHALKMAVVDIYHSRLKERQRRKKIIRDHGLINLRKFQLMERRYPKEVQDLYETMRRFARIVGPVEHDKFIESHALEFELRREIKRLQEYRTAGITNFCSARTYDHLKKTREEERLKRTMLSEVLQYIQDSSACQQWLRRQADIDSGLSPSIPMASNSGRRSAPPLNLTGLPGTEKLNEKEKELCQMVRLVPGAYLEYKSALLNECNKQGGLRLAQARALIKIDVNKTRKIYDFLIREGYITKG.

Pro-6 bears the Phosphoserine; in variant Ser-6 mark. A ZZ-type zinc finger spans residues Ser-12–Pro-69. Zn(2+) is bound by residues Cys-17, Cys-20, Cys-31, Cys-34, Cys-42, Cys-45, His-55, and His-59. Residues Val-70–Pro-122 enclose the SANT domain. Residues Lys-132 and Lys-138 each participate in a glycyl lysine isopeptide (Lys-Gly) (interchain with G-Cter in SUMO2) cross-link. The disordered stretch occupies residues Ser-348–Gly-372. In terms of domain architecture, SWIRM spans Asn-356 to Gly-443. A DNA-binding region spans residues Lys-426–Ile-435.

Interacts with GCN5 and NR3C1. Associated with the P/CAF protein in the PCAF complex. Component of the PCAF complex, at least composed of TADA2L/ADA2, TADA3L/ADA3, TAF5L/PAF65-beta, TAF6L/PAF65-alpha, TAF10/TAFII30, TAF12/TAFII20, TAF9/TAFII31 and TRRAP. Component of the ADA2A-containing complex (ATAC), composed of KAT14, KAT2A, TADA2L, TADA3L, ZZ3, MBIP, WDR5, YEATS2, CCDC101 and DR1. Interacts with CCDC134. In terms of tissue distribution, expressed in all tissues, but most abundantly in testis.

The protein resides in the nucleus. Its subcellular location is the chromosome. Its function is as follows. Component of the ATAC complex, a complex with histone acetyltransferase activity on histones H3 and H4. Required for the function of some acidic activation domains, which activate transcription from a distant site. Binds double-stranded DNA. Binds dinucleosomes, probably at the linker region between neighboring nucleosomes. Plays a role in chromatin remodeling. May promote TP53/p53 'Lys-321' acetylation, leading to reduced TP53 stability and transcriptional activity. May also promote XRCC6 acetylation thus facilitating cell apoptosis in response to DNA damage. This Homo sapiens (Human) protein is Transcriptional adapter 2-alpha (TADA2A).